The sequence spans 298 residues: Mitochondrial nicotinamide adenine dinucleotide transporter SLC25A51 (298 aa).

Positions 1–11 (MMDSEAHEKRP) are enriched in basic and acidic residues. A disordered region spans residues 1-21 (MMDSEAHEKRPPMLTSSNQDL). Solcar repeat units lie at residues 28-108 (VGDM…LSRL), 117-201 (PEFA…IKES), and 214-297 (NDFI…LLKI). 6 consecutive transmembrane segments (helical) span residues 36–56 (CGYC…KILF), 85–105 (LPPL…YEDL), 119–139 (FATR…LTPF), 180–200 (ILFR…PIKE), 216–236 (FICG…INVV), and 269–290 (LFRG…INAT).

This sequence belongs to the mitochondrial carrier (TC 2.A.29) family.

Its subcellular location is the mitochondrion inner membrane. It catalyses the reaction NAD(+)(in) = NAD(+)(out). Mitochondrial membrane carrier protein that mediates the import of NAD(+) into mitochondria. Mitochondrial NAD(+) is required for glycolysis and mitochondrial respiration. Compared to SLC25A52, SLC25A51-mediated transport is essential for the import of NAD(+) in mitochondria. The transport mechanism, uniport or antiport, its electrogenicity and substrate selectivity, remain to be elucidated. In Mus musculus (Mouse), this protein is Mitochondrial nicotinamide adenine dinucleotide transporter SLC25A51.